An 88-amino-acid polypeptide reads, in one-letter code: Mini zinc finger protein 3 (88 aa).

Residues 26–72 (YVECQKNHAANIGGYAVDGCREFMASGGDDALTCAACGCHRNFHRRE) form a ZF-HD dimerization-type; degenerate zinc finger.

As to quaternary structure, homo- and heterodimers. Interacts with ZHD3, ZHD5, ZHD6, ZHD7, ZHD8, ZHD9, ZHD10 and ZHD13. Mostly expressed in roots, stems and flowers, present in seedlings and leaves, and weakly observed in inflorescence and siliques.

Its subcellular location is the cytoplasm. In terms of biological role, inhibits zinc finger homeodomain (ZHD) transcription factors by interacting with them to prevent both their nuclear localization and their DNA-binding properties. Involved in integrating signals from multiple hormones by regulating the expression of specific genes. Promotes the formation of ectopic shoot meristems on leaf margins. The sequence is that of Mini zinc finger protein 3 (MIF3) from Arabidopsis thaliana (Mouse-ear cress).